The sequence spans 154 residues: Deoxyuridine 5'-triphosphate nucleotidohydrolase (154 aa).

Substrate contacts are provided by residues 64–66, N77, 81–83, and K91; these read RSG and TVD.

Belongs to the dUTPase family. As to quaternary structure, homotrimer. The cofactor is Mg(2+).

The catalysed reaction is dUTP + H2O = dUMP + diphosphate + H(+). Its pathway is pyrimidine metabolism; dUMP biosynthesis; dUMP from dCTP (dUTP route): step 2/2. Functionally, this enzyme is involved in nucleotide metabolism: it produces dUMP, the immediate precursor of thymidine nucleotides and it decreases the intracellular concentration of dUTP so that uracil cannot be incorporated into DNA. This Mycolicibacterium gilvum (strain PYR-GCK) (Mycobacterium gilvum (strain PYR-GCK)) protein is Deoxyuridine 5'-triphosphate nucleotidohydrolase.